The following is a 983-amino-acid chain: Receptor-like protein 19 (983 aa).

A signal peptide spans 1-25; it reads MMKGYITLSFLIILIFNFLDEFAAS. At 26 to 937 the chain is on the extracellular side; that stretch reads TRHLCDPDQS…EEDEEEVISW (912 aa). N-linked (GlcNAc...) asparagine glycosylation is found at asparagine 66 and asparagine 102. LRR repeat units lie at residues 82-108, 111-135, 136-159, 161-183, 184-207, 209-231, 232-255, 256-281, 283-302, 303-327, 328-351, 353-375, 376-399, 401-424, 425-448, 450-474, 475-498, 501-524, 525-548, 550-571, 578-602, 603-628, 629-652, 654-674, 675-700, 702-720, 721-744, 793-817, 818-840, 841-865, and 867-890; these read FGDV…LFRL, LRFL…LETL, SNLT…IGNL, HLIF…LGYL, SHLT…IGNL, YLTT…LGSL, FHLT…LGNL, SHLT…NLSC, TSFI…SFGN, LNQL…LLNL, RKLS…MSSL, NLKL…LFNI, PSLK…NISS, SNLT…ISKL, VNLK…IFSH, KSIE…ILSS, FKLL…SLSN, LVLI…LRSQ, ELML…LWML, VLNY…TKLG, PPAM…ICEL, PYLS…NIQS, PYLQ…IFES, ISLD…LSHI, SSLG…SLQE, QVLV…KTQF, SKLR…FFVN, LKVF…IGLL, KELH…SMGN, LMAL…LGKL, and YLAY…QFQT. N-linked (GlcNAc...) asparagine glycans are attached at residues asparagine 137, asparagine 158, asparagine 171, asparagine 190, asparagine 195, and asparagine 206. N-linked (GlcNAc...) asparagine glycans are attached at residues asparagine 254 and asparagine 278. A glycan (N-linked (GlcNAc...) asparagine) is linked at asparagine 347. 3 N-linked (GlcNAc...) asparagine glycosylation sites follow: asparagine 389, asparagine 396, and asparagine 402. 4 N-linked (GlcNAc...) asparagine glycosylation sites follow: asparagine 456, asparagine 461, asparagine 492, and asparagine 498. Asparagine 555, asparagine 558, asparagine 590, and asparagine 616 each carry an N-linked (GlcNAc...) asparagine glycan. Asparagine 734 and asparagine 744 each carry an N-linked (GlcNAc...) asparagine glycan. N-linked (GlcNAc...) asparagine glycosylation occurs at asparagine 824. N-linked (GlcNAc...) asparagine glycosylation is present at asparagine 872. The chain crosses the membrane as a helical span at residues 938-958; the sequence is IAAVIGFILGTALGLTFGCIL. The Cytoplasmic segment spans residues 959–983; it reads FSYKPDWFKNPFVRDKRRNIGTITH.

This sequence belongs to the RLP family.

Its subcellular location is the cell membrane. In Arabidopsis thaliana (Mouse-ear cress), this protein is Receptor-like protein 19.